We begin with the raw amino-acid sequence, 242 residues long: Ditrans,polycis-undecaprenyl-diphosphate synthase ((2E,6E)-farnesyl-diphosphate specific) (242 aa).

Residue Asp-21 is part of the active site. Asp-21 contributes to the Mg(2+) binding site. Substrate contacts are provided by residues 22 to 25 (GNGR), Trp-26, Arg-34, His-38, and 66 to 68 (SSE). Asn-69 serves as the catalytic Proton acceptor. Substrate is bound by residues Trp-70, Arg-72, Arg-189, and 195–197 (RIS). Glu-208 is a binding site for Mg(2+).

It belongs to the UPP synthase family. In terms of assembly, homodimer. Mg(2+) serves as cofactor.

The enzyme catalyses 8 isopentenyl diphosphate + (2E,6E)-farnesyl diphosphate = di-trans,octa-cis-undecaprenyl diphosphate + 8 diphosphate. Functionally, catalyzes the sequential condensation of isopentenyl diphosphate (IPP) with (2E,6E)-farnesyl diphosphate (E,E-FPP) to yield (2Z,6Z,10Z,14Z,18Z,22Z,26Z,30Z,34E,38E)-undecaprenyl diphosphate (di-trans,octa-cis-UPP). UPP is the precursor of glycosyl carrier lipid in the biosynthesis of bacterial cell wall polysaccharide components such as peptidoglycan and lipopolysaccharide. This Haemophilus ducreyi (strain 35000HP / ATCC 700724) protein is Ditrans,polycis-undecaprenyl-diphosphate synthase ((2E,6E)-farnesyl-diphosphate specific).